We begin with the raw amino-acid sequence, 545 residues long: Glucose-6-phosphate isomerase (545 aa).

The active-site Proton donor is Glu351. Active-site residues include His382 and Lys510.

Belongs to the GPI family.

Its subcellular location is the cytoplasm. The enzyme catalyses alpha-D-glucose 6-phosphate = beta-D-fructose 6-phosphate. Its pathway is carbohydrate biosynthesis; gluconeogenesis. It participates in carbohydrate degradation; glycolysis; D-glyceraldehyde 3-phosphate and glycerone phosphate from D-glucose: step 2/4. Functionally, catalyzes the reversible isomerization of glucose-6-phosphate to fructose-6-phosphate. The chain is Glucose-6-phosphate isomerase from Helicobacter pylori (strain G27).